Here is a 674-residue protein sequence, read N- to C-terminus: UvrABC system protein C (674 aa).

The GIY-YIG domain maps to 16–95 (TNPGVYRFRD…IKEFKPRFNV (80 aa)). The 36-residue stretch at 207 to 242 (KRFTNKLEKQMAAAVARLDYEQAARIRDDITALRKV) folds into the UVR domain.

Belongs to the UvrC family. As to quaternary structure, interacts with UvrB in an incision complex.

It localises to the cytoplasm. Functionally, the UvrABC repair system catalyzes the recognition and processing of DNA lesions. UvrC both incises the 5' and 3' sides of the lesion. The N-terminal half is responsible for the 3' incision and the C-terminal half is responsible for the 5' incision. The protein is UvrABC system protein C of Pseudarthrobacter chlorophenolicus (strain ATCC 700700 / DSM 12829 / CIP 107037 / JCM 12360 / KCTC 9906 / NCIMB 13794 / A6) (Arthrobacter chlorophenolicus).